Reading from the N-terminus, the 52-residue chain is Large ribosomal subunit protein bL32c (52 aa).

It belongs to the bacterial ribosomal protein bL32 family.

The protein localises to the plastid. Its subcellular location is the chloroplast. The protein is Large ribosomal subunit protein bL32c of Nymphaea alba (White water-lily).